Here is a 392-residue protein sequence, read N- to C-terminus: Succinyl-diaminopimelate desuccinylase (392 aa).

His-77 lines the Zn(2+) pocket. The active site involves Asp-79. Asp-110 is a binding site for Zn(2+). Catalysis depends on Glu-144, which acts as the Proton acceptor. 3 residues coordinate Zn(2+): Glu-145, Glu-173, and His-359.

It belongs to the peptidase M20A family. DapE subfamily. In terms of assembly, homodimer. The cofactor is Zn(2+). Co(2+) serves as cofactor.

It carries out the reaction N-succinyl-(2S,6S)-2,6-diaminopimelate + H2O = (2S,6S)-2,6-diaminopimelate + succinate. Its pathway is amino-acid biosynthesis; L-lysine biosynthesis via DAP pathway; LL-2,6-diaminopimelate from (S)-tetrahydrodipicolinate (succinylase route): step 3/3. Its function is as follows. Catalyzes the hydrolysis of N-succinyl-L,L-diaminopimelic acid (SDAP), forming succinate and LL-2,6-diaminopimelate (DAP), an intermediate involved in the bacterial biosynthesis of lysine and meso-diaminopimelic acid, an essential component of bacterial cell walls. The polypeptide is Succinyl-diaminopimelate desuccinylase (Thiobacillus denitrificans (strain ATCC 25259 / T1)).